A 180-amino-acid chain; its full sequence is Shikimate kinase (180 aa).

19-24 (GAGKTT) is an ATP binding site. T23 contacts Mg(2+). The substrate site is built by D41, R65, and G87. R125 contributes to the ATP binding site. R144 lines the substrate pocket.

Belongs to the shikimate kinase family. Monomer. The cofactor is Mg(2+).

It is found in the cytoplasm. It carries out the reaction shikimate + ATP = 3-phosphoshikimate + ADP + H(+). It functions in the pathway metabolic intermediate biosynthesis; chorismate biosynthesis; chorismate from D-erythrose 4-phosphate and phosphoenolpyruvate: step 5/7. In terms of biological role, catalyzes the specific phosphorylation of the 3-hydroxyl group of shikimic acid using ATP as a cosubstrate. The polypeptide is Shikimate kinase (Acinetobacter baylyi (strain ATCC 33305 / BD413 / ADP1)).